A 94-amino-acid chain; its full sequence is Integration host factor subunit beta (94 aa).

Belongs to the bacterial histone-like protein family. Heterodimer of an alpha and a beta chain.

Its function is as follows. This protein is one of the two subunits of integration host factor, a specific DNA-binding protein that functions in genetic recombination as well as in transcriptional and translational control. The polypeptide is Integration host factor subunit beta (Chelativorans sp. (strain BNC1)).